The following is a 207-amino-acid chain: Small ribosomal subunit protein uS4c (207 aa).

An S4 RNA-binding domain is found at 92-150 (MRLDNILFRLGFVPTIPSARQLINHRHILVNNRIVDVPSFHCKPKDIITIGSPKTYQSI).

This sequence belongs to the universal ribosomal protein uS4 family. Part of the 30S ribosomal subunit. Contacts protein S5. The interaction surface between S4 and S5 is involved in control of translational fidelity.

It is found in the plastid. The protein localises to the chloroplast. In terms of biological role, one of the primary rRNA binding proteins, it binds directly to 16S rRNA where it nucleates assembly of the body of the 30S subunit. Functionally, with S5 and S12 plays an important role in translational accuracy. The polypeptide is Small ribosomal subunit protein uS4c (rps4) (Equisetum variegatum (Variegated horsetail)).